The following is a 105-amino-acid chain: Small ribosomal subunit protein uS10 (105 aa).

The protein belongs to the universal ribosomal protein uS10 family. In terms of assembly, part of the 30S ribosomal subunit.

Functionally, involved in the binding of tRNA to the ribosomes. The sequence is that of Small ribosomal subunit protein uS10 from Rickettsia massiliae (strain Mtu5).